Here is a 731-residue protein sequence, read N- to C-terminus: Putative pentatricopeptide repeat-containing protein At1g17630 (731 aa).

15 PPR repeats span residues 88 to 118 (SGSL…VSLV), 122 to 156 (DLRL…GLTG), 157 to 191 (DGYI…GLKE), 192 to 222 (NLHV…MPVR), 223 to 257 (NRMS…EFKP), 258 to 292 (DEVT…GNAV), 293 to 327 (SGEA…GFEE), 328 to 358 (YLPS…IRNK), 359 to 393 (GIES…NHVC), 398 to 432 (NVVT…KVLA), 433 to 467 (NSVT…SMSE), 468 to 498 (NILV…IRDK), 499 to 533 (DLIS…GFHP), 534 to 569 (DGIA…GLEP), and 570 to 600 (QQEH…MPME). A type E motif region spans residues 605-680 (VLGALLNSCR…VSGSSWIEVK (76 aa)). Residues 681 to 711 (KKKYKFSSGSIVQSEFETIYPVLEDLVSHML) form a type E(+) motif region.

It belongs to the PPR family. PCMP-E subfamily.

In Arabidopsis thaliana (Mouse-ear cress), this protein is Putative pentatricopeptide repeat-containing protein At1g17630 (PCMP-E72).